A 370-amino-acid polypeptide reads, in one-letter code: tRNA-specific 2-thiouridylase MnmA (370 aa).

Residues 9-16 (GLSGGVDS) and methionine 35 each bind ATP. Residues 95 to 97 (NPD) form an interaction with target base in tRNA region. Catalysis depends on cysteine 100, which acts as the Nucleophile. A disulfide bridge connects residues cysteine 100 and cysteine 198. Glycine 124 is an ATP binding site. The segment at 148–150 (KDQ) is interaction with tRNA. Catalysis depends on cysteine 198, which acts as the Cysteine persulfide intermediate. Positions 316 to 317 (RY) are interaction with tRNA.

The protein belongs to the MnmA/TRMU family.

The protein localises to the cytoplasm. It carries out the reaction S-sulfanyl-L-cysteinyl-[protein] + uridine(34) in tRNA + AH2 + ATP = 2-thiouridine(34) in tRNA + L-cysteinyl-[protein] + A + AMP + diphosphate + H(+). Its function is as follows. Catalyzes the 2-thiolation of uridine at the wobble position (U34) of tRNA, leading to the formation of s(2)U34. The polypeptide is tRNA-specific 2-thiouridylase MnmA (Acidovorax ebreus (strain TPSY) (Diaphorobacter sp. (strain TPSY))).